A 446-amino-acid chain; its full sequence is Minor fimbrium tip subunit Mfa3 (446 aa).

Positions 1–20 (MMQLKKRYFALILLLFLWSG) are cleaved as a signal peptide. Cysteine 21 is lipidated: N-palmitoyl cysteine. The S-diacylglycerol cysteine moiety is linked to residue cysteine 21. A propeptide spanning residues 21 to 43 (CDRGVDPQPDPLQPDVYLLVNAR) is cleaved from the precursor.

It belongs to the bacteroidetes fimbrillin superfamily. FimB/Mfa2 family. As to quaternary structure, component of the fimbrium tip. Minor fimbriae are composed of a structural subunit, most often Mfa1, and the accessory subunits Mfa3, Mfa4 and Mfa5. Fimbrium assembly occurs by linear, head-to-tail oligomerization of fimbrial subunits. This is mediated via insertion of a C-terminal beta-strand from one subunit into a groove in the N-terminal domain of the following subunit. Mfa3 is required for Mfa4 and Mfa5 insertion into the fimbrium.

It is found in the fimbrium. It localises to the cell outer membrane. Its function is as follows. Tip subunit of the minor fimbriae. These filamentous pili are attached to the cell surface; they mediate biofilm formation, adhesion onto host cells and onto other bacteria that are part of the oral microbiome. They play an important role in invasion of periodontal tissues and are recognized as major virulence factors. Fimbrium subunits from different strains have highly divergent sequences, and this correlates with pathogenicity. The sequence is that of Minor fimbrium tip subunit Mfa3 (mfa3) from Porphyromonas gingivalis (strain ATCC 33277 / DSM 20709 / CIP 103683 / JCM 12257 / NCTC 11834 / 2561).